A 197-amino-acid polypeptide reads, in one-letter code: Recombination protein RecR (197 aa).

A C4-type zinc finger spans residues 55–70 (CVQCRDFTESEICTIC). The Toprim domain maps to 78 to 173 (QQLCVVESPA…RPSRLAQGMP (96 aa)).

Belongs to the RecR family.

Functionally, may play a role in DNA repair. It seems to be involved in an RecBC-independent recombinational process of DNA repair. It may act with RecF and RecO. In Xanthomonas euvesicatoria pv. vesicatoria (strain 85-10) (Xanthomonas campestris pv. vesicatoria), this protein is Recombination protein RecR.